A 72-amino-acid chain; its full sequence is Translation initiation factor IF-1 (72 aa).

The S1-like domain maps to methionine 1–lysine 72.

Belongs to the IF-1 family. In terms of assembly, component of the 30S ribosomal translation pre-initiation complex which assembles on the 30S ribosome in the order IF-2 and IF-3, IF-1 and N-formylmethionyl-tRNA(fMet); mRNA recruitment can occur at any time during PIC assembly.

It is found in the cytoplasm. Its function is as follows. One of the essential components for the initiation of protein synthesis. Stabilizes the binding of IF-2 and IF-3 on the 30S subunit to which N-formylmethionyl-tRNA(fMet) subsequently binds. Helps modulate mRNA selection, yielding the 30S pre-initiation complex (PIC). Upon addition of the 50S ribosomal subunit IF-1, IF-2 and IF-3 are released leaving the mature 70S translation initiation complex. In Alkaliphilus oremlandii (strain OhILAs) (Clostridium oremlandii (strain OhILAs)), this protein is Translation initiation factor IF-1.